Reading from the N-terminus, the 227-residue chain is Lipoprotein-releasing system ATP-binding protein LolD (227 aa).

The ABC transporter domain maps to Leu-7–Leu-227. Residue Ala-43–Ser-50 participates in ATP binding.

Belongs to the ABC transporter superfamily. Lipoprotein translocase (TC 3.A.1.125) family. In terms of assembly, the complex is composed of two ATP-binding proteins (LolD) and two transmembrane proteins (LolC and LolE).

Its subcellular location is the cell inner membrane. In terms of biological role, part of the ABC transporter complex LolCDE involved in the translocation of mature outer membrane-directed lipoproteins, from the inner membrane to the periplasmic chaperone, LolA. Responsible for the formation of the LolA-lipoprotein complex in an ATP-dependent manner. This Brucella abortus biovar 1 (strain 9-941) protein is Lipoprotein-releasing system ATP-binding protein LolD.